The sequence spans 423 residues: Glutamyl-tRNA reductase (423 aa).

Residues 49-52 (TCNR), Ser-111, 116-118 (EPQ), and Gln-122 each bind substrate. Catalysis depends on Cys-50, which acts as the Nucleophile. 191-196 (GAGEMS) is a binding site for NADP(+).

The protein belongs to the glutamyl-tRNA reductase family. In terms of assembly, homodimer.

The catalysed reaction is (S)-4-amino-5-oxopentanoate + tRNA(Glu) + NADP(+) = L-glutamyl-tRNA(Glu) + NADPH + H(+). It participates in porphyrin-containing compound metabolism; protoporphyrin-IX biosynthesis; 5-aminolevulinate from L-glutamyl-tRNA(Glu): step 1/2. In terms of biological role, catalyzes the NADPH-dependent reduction of glutamyl-tRNA(Glu) to glutamate 1-semialdehyde (GSA). This is Glutamyl-tRNA reductase from Syntrophus aciditrophicus (strain SB).